The chain runs to 216 residues: CsgBAC operon transcriptional regulatory protein (216 aa).

The 66-residue stretch at 149-214 folds into the HTH luxR-type domain; sequence NSTESALLTH…QAVSWANDNL (66 aa). Residues 173-192 constitute a DNA-binding region (H-T-H motif); sequence NNEIARSLFISENTVKTHLY.

It is found in the cell inner membrane. The master regulator for adhesive curli fimbriae expression; necessary for transcription of the csgBAC/ymdA operon. Plays a positive role in biofilm formation. May have the capability to respond to starvation and/or high cell density by activating csgBA transcription. Low-level constitutive expression confers an adherent curli fimbriae-expressing phenotype, up-regulates 10 genes and down-regulates 14 others. This Escherichia coli (strain K12) protein is CsgBAC operon transcriptional regulatory protein (csgD).